A 358-amino-acid polypeptide reads, in one-letter code: 3-isopropylmalate dehydrogenase (358 aa).

Substrate contacts are provided by R92, R102, R130, and D224. Residues D224, D248, and D252 each coordinate Mg(2+). 282–294 (GSAPDIAGQGIAN) provides a ligand contact to NAD(+).

The protein belongs to the isocitrate and isopropylmalate dehydrogenases family. LeuB type 1 subfamily. In terms of assembly, homodimer. Mg(2+) is required as a cofactor. Requires Mn(2+) as cofactor.

The protein localises to the cytoplasm. The enzyme catalyses (2R,3S)-3-isopropylmalate + NAD(+) = 4-methyl-2-oxopentanoate + CO2 + NADH. Its pathway is amino-acid biosynthesis; L-leucine biosynthesis; L-leucine from 3-methyl-2-oxobutanoate: step 3/4. In terms of biological role, catalyzes the oxidation of 3-carboxy-2-hydroxy-4-methylpentanoate (3-isopropylmalate) to 3-carboxy-4-methyl-2-oxopentanoate. The product decarboxylates to 4-methyl-2 oxopentanoate. The polypeptide is 3-isopropylmalate dehydrogenase (Bordetella avium (strain 197N)).